The primary structure comprises 230 residues: MSDLILQASNLEKEYRDGKLKTPVIKGLDFELRANEKVAIVGSSGSGKSTLLHLLAGLDKPTGGTVSLMSQAFSGLNEVKRGRLRNQYMGFVYQFHFLLPELNALENVMLPLRVRRTPSKDAEKQASALLDRVGLGHRIHHKPSELSGGERQRVAIARALITKPACVLADEPTGNLDESSAQQVFDLMLELNQEQNTALLVVTHDLKLAAKMDRQYQLTEGHFILPSETL.

Residues 6–230 (LQASNLEKEY…GHFILPSETL (225 aa)) enclose the ABC transporter domain. Residue 42-49 (GSSGSGKS) participates in ATP binding.

It belongs to the ABC transporter superfamily. Lipoprotein translocase (TC 3.A.1.125) family. The complex is composed of two ATP-binding proteins (LolD) and two transmembrane proteins (LolC and LolE).

The protein resides in the cell inner membrane. In terms of biological role, part of the ABC transporter complex LolCDE involved in the translocation of mature outer membrane-directed lipoproteins, from the inner membrane to the periplasmic chaperone, LolA. Responsible for the formation of the LolA-lipoprotein complex in an ATP-dependent manner. The chain is Lipoprotein-releasing system ATP-binding protein LolD from Hydrogenovibrio crunogenus (strain DSM 25203 / XCL-2) (Thiomicrospira crunogena).